The primary structure comprises 348 residues: Dihydroorotase (348 aa).

2 residues coordinate Zn(2+): H17 and H19. Residues H19–R21 and N45 each bind substrate. Zn(2+) contacts are provided by K103, H140, and H178. Residue K103 is modified to N6-carboxylysine. Substrate is bound at residue H140. A substrate-binding site is contributed by L223. D251 is a binding site for Zn(2+). Residue D251 is part of the active site. 2 residues coordinate substrate: H255 and A267.

The protein belongs to the metallo-dependent hydrolases superfamily. DHOase family. Class II DHOase subfamily. As to quaternary structure, homodimer. The cofactor is Zn(2+).

The catalysed reaction is (S)-dihydroorotate + H2O = N-carbamoyl-L-aspartate + H(+). The protein operates within pyrimidine metabolism; UMP biosynthesis via de novo pathway; (S)-dihydroorotate from bicarbonate: step 3/3. Catalyzes the reversible cyclization of carbamoyl aspartate to dihydroorotate. The chain is Dihydroorotase from Salmonella paratyphi A (strain ATCC 9150 / SARB42).